A 253-amino-acid chain; its full sequence is Sugar fermentation stimulation protein homolog (253 aa).

The protein belongs to the SfsA family.

The protein is Sugar fermentation stimulation protein homolog of Chromohalobacter salexigens (strain ATCC BAA-138 / DSM 3043 / CIP 106854 / NCIMB 13768 / 1H11).